A 442-amino-acid chain; its full sequence is Hydrolase phmG (442 aa).

The Nucleophile role is filled by Ser259.

Belongs to the AB hydrolase superfamily. FUS2 hydrolase family. As to quaternary structure, homodimer.

It functions in the pathway mycotoxin biosynthesis. Hydrolyase; part of the gene cluster that mediates the biosynthesis of the mycotoxins phomacins, leucine-derived cytochalasans with potent actin polymerization-inhibitory activities and monocot-specific antigerminative activities. The first step in the pathway is catalyzed by the hybrid PKS-NRPS phmA, assisted by the enoyl reductase phmE, that are responsible for fusion of the leucine precursor and the polyketide backbone to produce a 2-pyrrolidone intermediate. The polyketide synthase module (PKS) of phmA is responsible for the synthesis of the polyketide backbone and the downstream nonribosomal peptide synthetase (NRPS) amidates the carboxyl end of the polyketide with the leucine precursor. Because phmA lacks a designated enoylreductase (ER) domain, the required activity is provided the enoyl reductase phmE. Reduction by the hydrolyase phmG, followed by dehydration and intra-molecular Diels-Alder cyclization by the Diels-Alderase phmD then yield the required isoindolone-fused macrocycle. A number of oxidative steps catalyzed by the tailoring cytochrome P450 monooxygenase phmB, the FAD-linked oxidoreductase phmC and the short-chain dehydrogenase/reductase phmF, are further required to afford the final products, phomacin D and phomacin E. This chain is Hydrolase phmG, found in Phaeosphaeria nodorum (strain SN15 / ATCC MYA-4574 / FGSC 10173) (Glume blotch fungus).